Consider the following 239-residue polypeptide: Phosducin-like protein 3 (239 aa).

Met1 is modified (N-acetylmethionine). One can recognise a Phosducin domain in the interval 32-180 (EAEEEQRILQ…EGDIKAQFIG (149 aa)). Phosphoserine is present on Ser43. The interval 91 to 239 (FGEVLEISGK…MKRDSDSEGD (149 aa)) is thioredoxin fold. Interaction with XIAP regions lie at residues 97–99 (ISG) and 153–155 (TCI). Phosphoserine is present on residues Ser234 and Ser236.

The protein belongs to the phosducin family. As to quaternary structure, interacts (via thioredoxin fold region) with KDR/VEGFR2 (via juxtamembrane domain). Forms ternary complexes with the chaperonin CCT complex and actin substrate, leading to inhibition of actin folding. Interacts with XIAP (via BIR 3 and RING domain). Interacts with HSP90AA1 and HSP90AB1. Post-translationally, N-terminal methionine acetylation destabilizes the protein. Expressed in endothelial cells (at protein level). Expressed in all tissues examined including spleen, thymus, prostate, testis, ovary, small intestine and colon.

It is found in the cytoplasm. The protein resides in the perinuclear region. It localises to the endoplasmic reticulum. Its function is as follows. Acts as a chaperone for the angiogenic VEGF receptor KDR/VEGFR2, increasing its abundance by inhibiting its ubiquitination and degradation. Inhibits the folding activity of the chaperonin-containing T-complex (CCT) which leads to inhibition of cytoskeletal actin folding. Acts as a chaperone during heat shock alongside HSP90 and HSP40/70 chaperone complexes. Modulates the activation of caspases during apoptosis. The protein is Phosducin-like protein 3 (PDCL3) of Homo sapiens (Human).